Here is a 41-residue protein sequence, read N- to C-terminus: Large ribosomal subunit protein bL36 (41 aa).

It belongs to the bacterial ribosomal protein bL36 family.

This chain is Large ribosomal subunit protein bL36, found in Paracoccus denitrificans (strain Pd 1222).